Consider the following 1091-residue polypeptide: ATP-dependent helicase/deoxyribonuclease subunit B (1091 aa).

The protein belongs to the helicase family. AddB/RexB type 2 subfamily. Heterodimer of AddA and RexB. Mg(2+) is required as a cofactor.

The heterodimer acts as both an ATP-dependent DNA helicase and an ATP-dependent, dual-direction single-stranded exonuclease. Recognizes the chi site generating a DNA molecule suitable for the initiation of homologous recombination. This subunit has 5' -&gt; 3' nuclease activity but not helicase activity. This is ATP-dependent helicase/deoxyribonuclease subunit B from Streptococcus pneumoniae (strain Hungary19A-6).